The sequence spans 274 residues: Secreted RxLR effector protein 40 (274 aa).

Positions 1–21 are cleaved as a signal peptide; that stretch reads MRLYTQVVAASLVATLAIVDS. The short motif at 35 to 53 is the RxLR-dEER element; the sequence is RFLRQDNATVARVSEDGER. N-linked (GlcNAc...) asparagine glycosylation is found at Asn-41, Asn-74, and Asn-258.

This sequence belongs to the RxLR effector family.

The protein localises to the secreted. It localises to the host nucleus. Its subcellular location is the host cytoplasm. In terms of biological role, secreted effector that completely suppresses the host cell death induced by cell death-inducing proteins. In Plasmopara viticola (Downy mildew of grapevine), this protein is Secreted RxLR effector protein 40.